We begin with the raw amino-acid sequence, 164 residues long: S-ribosylhomocysteine lyase (164 aa).

Residues H61, H65, and C131 each contribute to the Fe cation site.

It belongs to the LuxS family. Homodimer. Fe cation is required as a cofactor.

It carries out the reaction S-(5-deoxy-D-ribos-5-yl)-L-homocysteine = (S)-4,5-dihydroxypentane-2,3-dione + L-homocysteine. Its function is as follows. Involved in the synthesis of autoinducer 2 (AI-2) which is secreted by bacteria and is used to communicate both the cell density and the metabolic potential of the environment. The regulation of gene expression in response to changes in cell density is called quorum sensing. Catalyzes the transformation of S-ribosylhomocysteine (RHC) to homocysteine (HC) and 4,5-dihydroxy-2,3-pentadione (DPD). The protein is S-ribosylhomocysteine lyase of Bifidobacterium longum subsp. infantis (strain ATCC 15697 / DSM 20088 / JCM 1222 / NCTC 11817 / S12).